Consider the following 417-residue polypeptide: Serine hydroxymethyltransferase (417 aa).

(6S)-5,6,7,8-tetrahydrofolate is bound by residues leucine 112 and 116–118 (GHL). Lysine 221 is modified (N6-(pyridoxal phosphate)lysine). Glutamate 247 serves as a coordination point for (6S)-5,6,7,8-tetrahydrofolate.

Belongs to the SHMT family. In terms of assembly, homodimer. Requires pyridoxal 5'-phosphate as cofactor.

Its subcellular location is the cytoplasm. The catalysed reaction is (6R)-5,10-methylene-5,6,7,8-tetrahydrofolate + glycine + H2O = (6S)-5,6,7,8-tetrahydrofolate + L-serine. The protein operates within one-carbon metabolism; tetrahydrofolate interconversion. Its pathway is amino-acid biosynthesis; glycine biosynthesis; glycine from L-serine: step 1/1. In terms of biological role, catalyzes the reversible interconversion of serine and glycine with tetrahydrofolate (THF) serving as the one-carbon carrier. This reaction serves as the major source of one-carbon groups required for the biosynthesis of purines, thymidylate, methionine, and other important biomolecules. Also exhibits THF-independent aldolase activity toward beta-hydroxyamino acids, producing glycine and aldehydes, via a retro-aldol mechanism. The sequence is that of Serine hydroxymethyltransferase from Borrelia garinii subsp. bavariensis (strain ATCC BAA-2496 / DSM 23469 / PBi) (Borreliella bavariensis).